The sequence spans 329 residues: Glucosyl-3-phosphoglycerate synthase (329 aa).

UDP-alpha-D-glucose-binding positions include 55 to 59 (PALDE), serine 86, lysine 119, and 139 to 141 (DSD). Residue aspartate 141 coordinates Mn(2+). (2R)-3-phosphoglycerate is bound at residue 189 to 192 (GRVT). UDP-alpha-D-glucose is bound at residue 234 to 237 (YGVE). Residue histidine 263 coordinates Mn(2+). Position 265 (asparagine 265) interacts with (2R)-3-phosphoglycerate.

Belongs to the glycosyltransferase 2 family. As to quaternary structure, homodimer. Requires Mg(2+) as cofactor. It depends on Mn(2+) as a cofactor.

The catalysed reaction is an NDP-alpha-D-glucose + (2R)-3-phosphoglycerate = (2R)-2-O-(alpha-D-glucopyranosyl)-3-phospho-glycerate + a ribonucleoside 5'-diphosphate + H(+). The enzyme catalyses (2R)-3-phosphoglycerate + UDP-alpha-D-glucose = (2R)-2-O-(alpha-D-glucopyranosyl)-3-phospho-glycerate + UDP + H(+). It catalyses the reaction GDP-D-glucose + (2R)-3-phosphoglycerate = (2R)-2-O-(alpha-D-glucopyranosyl)-3-phospho-glycerate + GDP + H(+). Its function is as follows. Involved in the biosynthesis of 6-O-methylglucose lipopolysaccarides (MGLPs). Catalyzes the transfer of the glucose moiety from UDP-alpha-D-glucose (UDP-Glc) to the position 2 of 3-phospho-D-glycerate (3-PGA) to form glucosyl-3-phosphoglycerate (GPG). To a lesser extent can also use GDP-Glc but not UDP-Gal or UDP-GlcNAc as the sugar donor. In Mycolicibacterium paratuberculosis (strain ATCC BAA-968 / K-10) (Mycobacterium paratuberculosis), this protein is Glucosyl-3-phosphoglycerate synthase.